Consider the following 206-residue polypeptide: Thiamine-phosphate synthase (206 aa).

Residues 38 to 42 (QLREK) and N70 contribute to the 4-amino-2-methyl-5-(diphosphooxymethyl)pyrimidine site. The Mg(2+) site is built by D71 and D90. A 4-amino-2-methyl-5-(diphosphooxymethyl)pyrimidine-binding site is contributed by T109. 135–137 (TST) contacts 2-[(2R,5Z)-2-carboxy-4-methylthiazol-5(2H)-ylidene]ethyl phosphate. K138 lines the 4-amino-2-methyl-5-(diphosphooxymethyl)pyrimidine pocket. Residues G165 and 185–186 (VS) contribute to the 2-[(2R,5Z)-2-carboxy-4-methylthiazol-5(2H)-ylidene]ethyl phosphate site.

This sequence belongs to the thiamine-phosphate synthase family. Mg(2+) serves as cofactor.

The enzyme catalyses 2-[(2R,5Z)-2-carboxy-4-methylthiazol-5(2H)-ylidene]ethyl phosphate + 4-amino-2-methyl-5-(diphosphooxymethyl)pyrimidine + 2 H(+) = thiamine phosphate + CO2 + diphosphate. It catalyses the reaction 2-(2-carboxy-4-methylthiazol-5-yl)ethyl phosphate + 4-amino-2-methyl-5-(diphosphooxymethyl)pyrimidine + 2 H(+) = thiamine phosphate + CO2 + diphosphate. The catalysed reaction is 4-methyl-5-(2-phosphooxyethyl)-thiazole + 4-amino-2-methyl-5-(diphosphooxymethyl)pyrimidine + H(+) = thiamine phosphate + diphosphate. Its pathway is cofactor biosynthesis; thiamine diphosphate biosynthesis; thiamine phosphate from 4-amino-2-methyl-5-diphosphomethylpyrimidine and 4-methyl-5-(2-phosphoethyl)-thiazole: step 1/1. Functionally, condenses 4-methyl-5-(beta-hydroxyethyl)thiazole monophosphate (THZ-P) and 2-methyl-4-amino-5-hydroxymethyl pyrimidine pyrophosphate (HMP-PP) to form thiamine monophosphate (TMP). The polypeptide is Thiamine-phosphate synthase (Fusobacterium nucleatum subsp. nucleatum (strain ATCC 25586 / DSM 15643 / BCRC 10681 / CIP 101130 / JCM 8532 / KCTC 2640 / LMG 13131 / VPI 4355)).